The chain runs to 1072 residues: Carbamoyl phosphate synthase large chain (1072 aa).

The segment at 1–401 is carboxyphosphate synthetic domain; the sequence is MPKRLDINTI…SLLKAVRSLE (401 aa). Residues Arg-129, Arg-169, Gly-175, Gly-176, Lys-208, Ile-210, Glu-215, Gly-241, Val-242, His-243, Gln-284, and Glu-298 each coordinate ATP. One can recognise an ATP-grasp 1 domain in the interval 133 to 327; the sequence is RTLMQELNEP…IAKLAAKIAV (195 aa). Residues Gln-284, Glu-298, and Asn-300 each coordinate Mg(2+). 3 residues coordinate Mn(2+): Gln-284, Glu-298, and Asn-300. Residues 402–546 form an oligomerization domain region; sequence LGVYHLELEH…YSTYGDENES (145 aa). The carbamoyl phosphate synthetic domain stretch occupies residues 547–929; that stretch reads VRTDRKSVVV…ALYKGLVASG (383 aa). One can recognise an ATP-grasp 2 domain in the interval 671 to 861; that stretch reads EAALTQLGIP…MANVATKVIL (191 aa). ATP is bound by residues Arg-707, Arg-746, Glu-752, Gly-777, Val-778, His-779, Ser-780, Gln-820, and Glu-832. The Mg(2+) site is built by Gln-820, Glu-832, and Asn-834. 3 residues coordinate Mn(2+): Gln-820, Glu-832, and Asn-834. The 143-residue stretch at 930 to 1072 folds into the MGS-like domain; sequence INIPTHGSVI…QTKRHEVVHA (143 aa). Positions 930 to 1072 are allosteric domain; the sequence is INIPTHGSVI…QTKRHEVVHA (143 aa).

The protein belongs to the CarB family. In terms of assembly, composed of two chains; the small (or glutamine) chain promotes the hydrolysis of glutamine to ammonia, which is used by the large (or ammonia) chain to synthesize carbamoyl phosphate. Tetramer of heterodimers (alpha,beta)4. The cofactor is Mg(2+). Mn(2+) is required as a cofactor.

The catalysed reaction is hydrogencarbonate + L-glutamine + 2 ATP + H2O = carbamoyl phosphate + L-glutamate + 2 ADP + phosphate + 2 H(+). It catalyses the reaction hydrogencarbonate + NH4(+) + 2 ATP = carbamoyl phosphate + 2 ADP + phosphate + 2 H(+). The protein operates within amino-acid biosynthesis; L-arginine biosynthesis; carbamoyl phosphate from bicarbonate: step 1/1. It participates in pyrimidine metabolism; UMP biosynthesis via de novo pathway; (S)-dihydroorotate from bicarbonate: step 1/3. In terms of biological role, large subunit of the glutamine-dependent carbamoyl phosphate synthetase (CPSase). CPSase catalyzes the formation of carbamoyl phosphate from the ammonia moiety of glutamine, carbonate, and phosphate donated by ATP, constituting the first step of 2 biosynthetic pathways, one leading to arginine and/or urea and the other to pyrimidine nucleotides. The large subunit (synthetase) binds the substrates ammonia (free or transferred from glutamine from the small subunit), hydrogencarbonate and ATP and carries out an ATP-coupled ligase reaction, activating hydrogencarbonate by forming carboxy phosphate which reacts with ammonia to form carbamoyl phosphate. This chain is Carbamoyl phosphate synthase large chain, found in Bacillus cereus (strain G9842).